The primary structure comprises 408 residues: Serine/threonine transporter SstT (408 aa).

Helical transmembrane passes span 11 to 31 (LANG…VSLA), 43 to 63 (FLGS…VFIL), 82 to 102 (IVVL…LLSM), 141 to 161 (ALMT…GLAL), 192 to 212 (IGIF…AIAG), 216 to 236 (LLAV…PLIV), 298 to 318 (MGGA…TLGI), 339 to 359 (ASGV…LFGI), and 363 to 383 (VAMQ…AAET).

This sequence belongs to the dicarboxylate/amino acid:cation symporter (DAACS) (TC 2.A.23) family.

The protein localises to the cell inner membrane. It carries out the reaction L-serine(in) + Na(+)(in) = L-serine(out) + Na(+)(out). The catalysed reaction is L-threonine(in) + Na(+)(in) = L-threonine(out) + Na(+)(out). In terms of biological role, involved in the import of serine and threonine into the cell, with the concomitant import of sodium (symport system). In Shewanella sp. (strain MR-7), this protein is Serine/threonine transporter SstT.